We begin with the raw amino-acid sequence, 210 residues long: Coatomer subunit zeta-2 (210 aa).

Over residues 1–12 (MQRPEAWPRPHP) the composition is skewed to basic and acidic residues. Residues 1–34 (MQRPEAWPRPHPGEGAAAAQAGGPAPPARAGEPS) form a disordered region. Low complexity predominate over residues 13-34 (GEGAAAAQAGGPAPPARAGEPS).

The protein belongs to the adaptor complexes small subunit family. Oligomeric complex.

The protein localises to the cytoplasm. It localises to the endoplasmic reticulum-Golgi intermediate compartment membrane. The protein resides in the golgi apparatus membrane. Its subcellular location is the cytoplasmic vesicle. It is found in the COPI-coated vesicle membrane. Functionally, the coatomer is a cytosolic protein complex that binds to dilysine motifs and reversibly associates with Golgi non-clathrin-coated vesicles, which further mediate biosynthetic protein transport from the ER, via the Golgi up to the trans Golgi network. Coatomer complex is required for budding from Golgi membranes, and is essential for the retrograde Golgi-to-ER transport of dilysine-tagged proteins. The zeta subunit may be involved in regulating the coat assembly and, hence, the rate of biosynthetic protein transport due to its association-dissociation properties with the coatomer complex. This is Coatomer subunit zeta-2 (COPZ2) from Homo sapiens (Human).